The primary structure comprises 431 residues: F-box protein pof14 (431 aa).

In terms of domain architecture, F-box; atypical spans 172 to 186 (CPDEILQLIFSYCYD).

Component of the E3 ubiquitin ligase Skp1-Cullin-1-F-box (SCF) complex. Interacts with skp1, cul1 and erg9.

The protein resides in the cytoplasm. It localises to the nucleus. Its subcellular location is the endoplasmic reticulum. Its function is as follows. Expression is induced during oxidative stress. Plays an essential, SCF-independent, role in the stress response to hydrogen peroxide for survival, by negatively regulating ergosterol synthesis via direct binding to the squalene synthase erg9. The chain is F-box protein pof14 (pof14) from Schizosaccharomyces pombe (strain 972 / ATCC 24843) (Fission yeast).